The chain runs to 466 residues: Cysteine--tRNA ligase (466 aa).

Cys-33 provides a ligand contact to Zn(2+). Positions 35–45 (PTVYDYAHIGN) match the 'HIGH' region motif. The Zn(2+) site is built by Cys-221, His-246, and Glu-250. The 'KMSKS' region motif lies at 279 to 283 (KMSKS). Lys-282 is a binding site for ATP.

This sequence belongs to the class-I aminoacyl-tRNA synthetase family. Monomer. The cofactor is Zn(2+).

It localises to the cytoplasm. It carries out the reaction tRNA(Cys) + L-cysteine + ATP = L-cysteinyl-tRNA(Cys) + AMP + diphosphate. The polypeptide is Cysteine--tRNA ligase (Rhizobium meliloti (strain 1021) (Ensifer meliloti)).